The following is a 381-amino-acid chain: Trans-enoyl reductase iliB (381 aa).

An NADP(+)-binding site is contributed by 50-53; the sequence is VDGK. 145–152 is a binding site for substrate; sequence ATLATVGL. NADP(+) contacts are provided by residues 213–216, Y231, and 278–279; these read SPGS and LD. 298–302 contacts substrate; that stretch reads TYTQF. 367–368 serves as a coordination point for NADP(+); the sequence is IS.

It belongs to the zinc-containing alcohol dehydrogenase family. Monomer.

It carries out the reaction N-[(4E,6E,10S,12Z,14E)-6,10-dimethyl-3-oxohexadeca-4,6,12,14-tetraenoyl]-L-tyrosyl-[ACP] = (3E,5S)-3-[(2E,4E,8S,10E,12Z)-1-hydroxy-4,8-dimethyltetradeca-2,4,10,12-tetraen-1-ylidene]-5-[(4-hydroxyphenyl)methyl]pyrrolidine-2,4-dione + holo-[ACP] + H(+). Its pathway is mycotoxin biosynthesis. Functionally, trans-enoyl reductase; part of the gene cluster that mediates the biosynthesis of ilicicolin H, a 4-hydroxy-2-pyridonealkaloid that has potent and broad antifungal activities by inhibiting the mitochondrial respiration chain. IliB collaborates with the hybrid PKS-NRPS synthetase iliA to assemble the backbone of ilicicolin H. The PKS portion of iliA and trans-acting enoyl reductase iliB work together to construct an octaketide, and two methyl groups are introduced by the MT domain of iliA during the chain assembly. The nascent chain is then condensed with tyrosine, catalyzed by the iliA C domain, and the resulting PKS-NRPS hybrid is offloaded by the iliA RED domain to form an advanced tetramic acid intermediate. The biosynthesis of ilicicolin H starts with formation of the tetramic acid by the hybrid PKS-NRPS synthetase iliA with the partnering trans-enoyl reductase iliB since iliA lacks a designated enoylreductase (ER) domain. The cytochrome P450 monooxygenase iliC then catalyzes the ring expansion of the tetramate to the acyclic 2-pyridone. The pericyclase iliD further converts the acyclic 2-pyridone into 8-epi-ilicicolin H. 8-epi-ilicicolin H might then spontaneously convert to ilicicolin H since ilicicolin H is produced in the absence of the epimerase iliE, in contrast to what was observed for the Talaromyces variabilis ilicolin H biosynthetic pathway. This is Trans-enoyl reductase iliB from Neonectria sp. (strain DH2).